The sequence spans 156 residues: V-type proton ATPase 16 kDa proteolipid subunit c (156 aa).

The Lumenal segment spans residues 1–7 (MAENPIY). A helical membrane pass occupies residues 8–30 (GPFFGVMGAASAIIFSALGAAYG). The Cytoplasmic portion of the chain corresponds to 31 to 52 (TAKSGTGIAAMSVMRPELIMKS). A helical transmembrane segment spans residues 53 to 73 (IIPVVMAGIIAIYGLVVAVLI). Over 74–92 (AGSLDAPSNNYTLYKGFIH) the chain is Lumenal. The chain crosses the membrane as a helical span at residues 93-114 (LGAGLAVGFSGLAAGFAIGIVG). The Cytoplasmic segment spans residues 115 to 126 (DAGVRGTAQQPR). Residues 127 to 152 (LFVGMILILIFAEVLGLYGLIVAIYL) traverse the membrane as a helical segment. Over 153-156 (YTKQ) the chain is Lumenal.

The protein belongs to the V-ATPase proteolipid subunit family. V-ATPase is a heteromultimeric enzyme made up of two complexes: the ATP-hydrolytic V1 complex and the proton translocation V0 complex. The V1 complex consists of three catalytic AB heterodimers that form a heterohexamer, three peripheral stalks each consisting of EG heterodimers, one central rotor including subunits D and F, and the regulatory subunits C and H. The proton translocation complex V0 consists of the proton transport subunit a, a ring of proteolipid subunits c9c'', rotary subunit d, subunits e and f, and the accessory subunits VhaAC45 and ATP6AP2.

The protein localises to the membrane. In terms of biological role, proton-conducting pore forming subunit of the V0 complex of vacuolar(H+)-ATPase (V-ATPase), a multisubunit enzyme composed of a peripheral complex (V1) that hydrolyzes ATP and a membrane integral complex (V0) that translocates protons. V-ATPase is responsible for acidifying and maintaining the pH of intracellular compartments and in some cell types, is targeted to the plasma membrane, where it is responsible for acidifying the extracellular environment. The sequence is that of V-type proton ATPase 16 kDa proteolipid subunit c (VHA16) from Heliothis virescens (Tobacco budworm moth).